The sequence spans 271 residues: Acyl-[acyl-carrier-protein]--UDP-N-acetylglucosamine O-acyltransferase (271 aa).

It belongs to the transferase hexapeptide repeat family. LpxA subfamily. In terms of assembly, homotrimer.

The protein localises to the cytoplasm. The catalysed reaction is a (3R)-hydroxyacyl-[ACP] + UDP-N-acetyl-alpha-D-glucosamine = a UDP-3-O-[(3R)-3-hydroxyacyl]-N-acetyl-alpha-D-glucosamine + holo-[ACP]. The protein operates within glycolipid biosynthesis; lipid IV(A) biosynthesis; lipid IV(A) from (3R)-3-hydroxytetradecanoyl-[acyl-carrier-protein] and UDP-N-acetyl-alpha-D-glucosamine: step 1/6. In terms of biological role, involved in the biosynthesis of lipid A, a phosphorylated glycolipid that anchors the lipopolysaccharide to the outer membrane of the cell. This Agrobacterium fabrum (strain C58 / ATCC 33970) (Agrobacterium tumefaciens (strain C58)) protein is Acyl-[acyl-carrier-protein]--UDP-N-acetylglucosamine O-acyltransferase.